Reading from the N-terminus, the 670-residue chain is UvrABC system protein B (670 aa).

One can recognise a Helicase ATP-binding domain in the interval E25–R412. G38 to T45 contacts ATP. The short motif at Y91–I114 is the Beta-hairpin element. The 154-residue stretch at Q429 to I582 folds into the Helicase C-terminal domain. Residues S631–R666 enclose the UVR domain.

It belongs to the UvrB family. Forms a heterotetramer with UvrA during the search for lesions. Interacts with UvrC in an incision complex.

It localises to the cytoplasm. Functionally, the UvrABC repair system catalyzes the recognition and processing of DNA lesions. A damage recognition complex composed of 2 UvrA and 2 UvrB subunits scans DNA for abnormalities. Upon binding of the UvrA(2)B(2) complex to a putative damaged site, the DNA wraps around one UvrB monomer. DNA wrap is dependent on ATP binding by UvrB and probably causes local melting of the DNA helix, facilitating insertion of UvrB beta-hairpin between the DNA strands. Then UvrB probes one DNA strand for the presence of a lesion. If a lesion is found the UvrA subunits dissociate and the UvrB-DNA preincision complex is formed. This complex is subsequently bound by UvrC and the second UvrB is released. If no lesion is found, the DNA wraps around the other UvrB subunit that will check the other stand for damage. This chain is UvrABC system protein B, found in Pseudomonas aeruginosa (strain ATCC 15692 / DSM 22644 / CIP 104116 / JCM 14847 / LMG 12228 / 1C / PRS 101 / PAO1).